The sequence spans 157 residues: 2-C-methyl-D-erythritol 2,4-cyclodiphosphate synthase (157 aa).

A divalent metal cation is bound by residues Asp-8 and His-10. 4-CDP-2-C-methyl-D-erythritol 2-phosphate-binding positions include 8 to 10 (DVH) and 34 to 35 (HS). His-42 provides a ligand contact to a divalent metal cation. 4-CDP-2-C-methyl-D-erythritol 2-phosphate is bound by residues 56 to 58 (DIG), 61 to 65 (FPDSD), 132 to 135 (TTTE), Phe-139, and Arg-142.

This sequence belongs to the IspF family. As to quaternary structure, homotrimer. A divalent metal cation serves as cofactor.

It carries out the reaction 4-CDP-2-C-methyl-D-erythritol 2-phosphate = 2-C-methyl-D-erythritol 2,4-cyclic diphosphate + CMP. It functions in the pathway isoprenoid biosynthesis; isopentenyl diphosphate biosynthesis via DXP pathway; isopentenyl diphosphate from 1-deoxy-D-xylulose 5-phosphate: step 4/6. Involved in the biosynthesis of isopentenyl diphosphate (IPP) and dimethylallyl diphosphate (DMAPP), two major building blocks of isoprenoid compounds. Catalyzes the conversion of 4-diphosphocytidyl-2-C-methyl-D-erythritol 2-phosphate (CDP-ME2P) to 2-C-methyl-D-erythritol 2,4-cyclodiphosphate (ME-CPP) with a corresponding release of cytidine 5-monophosphate (CMP). The protein is 2-C-methyl-D-erythritol 2,4-cyclodiphosphate synthase of Syntrophomonas wolfei subsp. wolfei (strain DSM 2245B / Goettingen).